The following is a 588-amino-acid chain: MLKSISLLKNNQILLKNIINNGRIINNVGEKLSSKSLLKINYSSSTTDRTFNILDGTIDKNSAEYKDNLINMNSTLKQLKENIEKIKLGGGEKLNQKNISRGKLLVRERIEALIDVGSPFLEFSQLAGWGMYGKEEVAAGGIITGIGKIHGVECVIVANDSTVKGGTYFPITVKKHLRAQEIAQENNLPCIYLVDSGGANLPRQADVFPDRDHFGRIFFNQANMSAKRIPQIAVVMGSCTAGGAYVPAMADESVIVKGTGTIFLGGPPLVKAATGEIVTSEELGGADLHCRTSGVTDHYARDDAEAIAITRRIVSNLNRKKQPSPVITETEEPLYPTSELAGIVPSDLKKNFDIRKVIARLVDGSRFDEFKELYGTTLICGFARVHGMPVGIIANNGILFSESAVKGAHFIELCNQRGIPLVFLQNITGFMVGKTYESKGIAKDGAKMVMAVATAKVPKITMIIGGSFGAGNYGMCGRSYSPRFLYMWPNAKISVMGGEQAASVLAQIQKDNMAKENKQWSPEEENTFKKPISDKFEEEGSIYYSSARCWDDGVIDPQDSRKVIALSLSACMNQPINPPSDGFGVFRM.

Positions 72-329 (MNSTLKQLKE…KKQPSPVITE (258 aa)) constitute a CoA carboxyltransferase N-terminal domain. Residues 72–570 (MNSTLKQLKE…RKVIALSLSA (499 aa)) form a carboxyltransferase region. Positions 329 to 570 (ETEEPLYPTS…RKVIALSLSA (242 aa)) constitute a CoA carboxyltransferase C-terminal domain. The tract at residues 366–395 (RFDEFKELYGTTLICGFARVHGMPVGIIAN) is acyl-CoA binding.

This sequence belongs to the AccD/PCCB family. As to quaternary structure, probably a dodecamer composed of six biotin-containing alpha subunits and six beta subunits.

It is found in the mitochondrion matrix. The enzyme catalyses 3-methylbut-2-enoyl-CoA + hydrogencarbonate + ATP = 3-methyl-(2E)-glutaconyl-CoA + ADP + phosphate + H(+). The protein operates within amino-acid degradation; L-leucine degradation; (S)-3-hydroxy-3-methylglutaryl-CoA from 3-isovaleryl-CoA: step 2/3. Functionally, carboxyltransferase subunit of the 3-methylcrotonyl-CoA carboxylase, an enzyme that catalyzes the conversion of 3-methylcrotonyl-CoA to 3-methylglutaconyl-CoA, a critical step for leucine and isovaleric acid catabolism. The chain is Methylcrotonoyl-CoA carboxylase beta chain, mitochondrial (mccb) from Dictyostelium discoideum (Social amoeba).